The following is a 647-amino-acid chain: Nucleoside triphosphatase I (647 aa).

Positions Phe-48–Lys-213 constitute a Helicase ATP-binding domain. Trp-61–Thr-68 contacts ATP. The short motif at Asp-150 to His-153 is the DEXH box element. Positions Tyr-377 to Lys-540 constitute a Helicase C-terminal domain. Residues Asp-466–Ile-532 are binding to the cap-specific mRNA (nucleoside-2'-O-)-methyltransferase.

It belongs to the helicase family. NPH I subfamily. As to quaternary structure, monomer. Interacts (via C-terminus) with RAP94 (via N-terminus). Interacts with the cap-specific mRNA (nucleoside-2'-O-)-methyltransferase.

The protein resides in the virion. The catalysed reaction is a ribonucleoside 5'-triphosphate + H2O = a ribonucleoside 5'-diphosphate + phosphate + H(+). DNA-dependent ATPase required for providing the needed energy to achieve the termination of early transcripts. Acts in concert with the RAP94 subunit of the virion RNA polymerase and the capping enzyme/VTF to catalyze release of UUUUUNU-containing nascent RNA from the elongation complex. NPH-I must bind ssDNA in order to exhibit ATPase activity. This chain is Nucleoside triphosphatase I (NPH1), found in Melanoplus sanguinipes entomopoxvirus (MsEPV).